We begin with the raw amino-acid sequence, 149 residues long: MRCPFCATDDTKVVDSRLTADGYQIRRRRECPVCKERFTTFESAELLIPHIVKNNGSREPFDERKLRTSLSRALEKRPVSTDDVEQAIHRIVLQLQATGEREVASKFVGDLVLGELKSLDKVAYIRFASVYLSFDDVEEFSKEIERLRN.

Residues 3 to 34 fold into a zinc finger; that stretch reads CPFCATDDTKVVDSRLTADGYQIRRRRECPVC. In terms of domain architecture, ATP-cone spans 49–139; that stretch reads PHIVKNNGSR…VYLSFDDVEE (91 aa).

The protein belongs to the NrdR family. It depends on Zn(2+) as a cofactor.

Its function is as follows. Negatively regulates transcription of bacterial ribonucleotide reductase nrd genes and operons by binding to NrdR-boxes. The protein is Transcriptional repressor NrdR of Glaesserella parasuis serovar 5 (strain SH0165) (Haemophilus parasuis).